The following is a 387-amino-acid chain: Formate-dependent phosphoribosylglycinamide formyltransferase (387 aa).

N(1)-(5-phospho-beta-D-ribosyl)glycinamide is bound by residues 15–16 (EL) and Glu75. Residues Arg106, Lys147, 152-157 (SSGKGQ), 187-190 (EEFI), and Glu195 contribute to the ATP site. The ATP-grasp domain maps to 111 to 301 (DLASNELNIR…EFELHLRAVL (191 aa)). Glu260 and Glu272 together coordinate Mg(2+). N(1)-(5-phospho-beta-D-ribosyl)glycinamide is bound by residues Asp279, Lys349, and 356–357 (RR).

The protein belongs to the PurK/PurT family. As to quaternary structure, homodimer.

The catalysed reaction is N(1)-(5-phospho-beta-D-ribosyl)glycinamide + formate + ATP = N(2)-formyl-N(1)-(5-phospho-beta-D-ribosyl)glycinamide + ADP + phosphate + H(+). It functions in the pathway purine metabolism; IMP biosynthesis via de novo pathway; N(2)-formyl-N(1)-(5-phospho-D-ribosyl)glycinamide from N(1)-(5-phospho-D-ribosyl)glycinamide (formate route): step 1/1. In terms of biological role, involved in the de novo purine biosynthesis. Catalyzes the transfer of formate to 5-phospho-ribosyl-glycinamide (GAR), producing 5-phospho-ribosyl-N-formylglycinamide (FGAR). Formate is provided by PurU via hydrolysis of 10-formyl-tetrahydrofolate. The polypeptide is Formate-dependent phosphoribosylglycinamide formyltransferase (Prochlorococcus marinus (strain NATL1A)).